The chain runs to 73 residues: ATP synthase subunit c (73 aa).

The next 2 membrane-spanning stretches (helical) occupy residues 4–24 (LAIG…GIGI) and 51–71 (GALA…IIIF).

This sequence belongs to the ATPase C chain family. F-type ATPases have 2 components, F(1) - the catalytic core - and F(0) - the membrane proton channel. F(1) has five subunits: alpha(3), beta(3), gamma(1), delta(1), epsilon(1). F(0) has three main subunits: a(1), b(2) and c(10-14). The alpha and beta chains form an alternating ring which encloses part of the gamma chain. F(1) is attached to F(0) by a central stalk formed by the gamma and epsilon chains, while a peripheral stalk is formed by the delta and b chains.

The protein localises to the cell membrane. Functionally, f(1)F(0) ATP synthase produces ATP from ADP in the presence of a proton or sodium gradient. F-type ATPases consist of two structural domains, F(1) containing the extramembraneous catalytic core and F(0) containing the membrane proton channel, linked together by a central stalk and a peripheral stalk. During catalysis, ATP synthesis in the catalytic domain of F(1) is coupled via a rotary mechanism of the central stalk subunits to proton translocation. Its function is as follows. Key component of the F(0) channel; it plays a direct role in translocation across the membrane. A homomeric c-ring of between 10-14 subunits forms the central stalk rotor element with the F(1) delta and epsilon subunits. The chain is ATP synthase subunit c from Caldanaerobacter subterraneus subsp. tengcongensis (strain DSM 15242 / JCM 11007 / NBRC 100824 / MB4) (Thermoanaerobacter tengcongensis).